Here is a 610-residue protein sequence, read N- to C-terminus: GATOR complex protein NPRL3 (610 aa).

Ser-437 is subject to Phosphoserine. The disordered stretch occupies residues 474–501 (REASEDHSSLASDNIAVQPSSSHKSNFS). Residues 482 to 501 (SLASDNIAVQPSSSHKSNFS) are compositionally biased toward polar residues.

This sequence belongs to the NPR3 family. In terms of assembly, component of the GATOR complex consisting of mio, Nup44A/Seh1, Im11, Nplr3, Nplr2, Wdr24, Wdr59 and Sec13. Within the GATOR complex, probable component of the GATOR1 subcomplex which is likely composed of Iml1, Nplr2 and Nplr3. Interacts with Nprl2.

The protein resides in the cytoplasm. It is found in the lysosome. Functionally, an essential component of the GATOR subcomplex GATOR1 which functions as an inhibitor of the amino acid-sensing branch of the TORC1 signaling pathway. The two GATOR subcomplexes, GATOR1 and GATOR2, regulate the TORC1 pathway in order to mediate metabolic homeostasis, female gametogenesis and the response to amino acid limitation and complete starvation. The function of GATOR1 in negatively regulating the TORC1 pathway is essential for maintaining baseline levels of TORC1 activity under nutrient rich conditions, and for promoting survival during amino acid or complete starvation by inhibiting TORC1-dependent cell growth and promoting catabolic metabolism and autophagy. In addition, this inhibition of TORC1 is necessary to maintain female fertility under normal conditions and during periods of nutrient stress. GATOR1 and GATOR2 act at different stages of oogenesis to regulate TORC1 in order to control meiotic entry and promote oocyte growth and development. After exactly four mitotic cyst divisions, the GATOR1 complex members (Iml1, Nprl2 and Nprl3) down-regulate TORC1 to slow cellular metabolism and promote the mitotic/meiotic transition. At later stages of oogenesis, the mio and Nup44A components of the GATOR2 complex inhibit GATOR1 and thus activate TORC1 to promote meiotic progression, and drive oocyte growth and development. The sequence is that of GATOR complex protein NPRL3 from Drosophila melanogaster (Fruit fly).